Reading from the N-terminus, the 216-residue chain is Protein fmp32, mitochondrial (216 aa).

Residues 111–133 (RQEMVALHSQVEQLFSDVERLKT) are a coiled coil. Residues 193–215 (TLQWVFGIVTGSGALLLAYVRLI) traverse the membrane as a helical segment.

Belongs to the CCDC90 family.

The protein resides in the mitochondrion. It localises to the membrane. The polypeptide is Protein fmp32, mitochondrial (fmp32) (Schizosaccharomyces pombe (strain 972 / ATCC 24843) (Fission yeast)).